We begin with the raw amino-acid sequence, 312 residues long: ECF RNA polymerase sigma factor SigJ (312 aa).

A sigma-70 factor domain-2 region spans residues 6–65; sequence FEALRQHLMSVAYRLTGTVADAEDIVQEAWLRWDSPDTVIADPRAWLTTVVSRLGLDKLR. A Polymerase core binding motif is present at residues 29–32; the sequence is DIVQ. The tract at residues 107-155 is sigma-70 factor domain-4; sequence MVVLERLRPDQRVAFVLHDGFAVPFAEVAEVLGTSEAAARQLASRARKA. A DNA-binding region (H-T-H motif) is located at residues 131 to 150; it reads FAEVAEVLGTSEAAARQLAS. Positions 293–312 are disordered; it reads GSPLKERRAQPTGRGRHHRN.

This sequence belongs to the sigma-70 factor family. ECF subfamily. In terms of assembly, interacts transiently with the RNA polymerase catalytic core formed by RpoA, RpoB, RpoC and RpoZ (2 alpha, 1 beta, 1 beta' and 1 omega subunit) to form the RNA polymerase holoenzyme that can initiate transcription.

Its function is as follows. Sigma factors are initiation factors that promote the attachment of RNA polymerase to specific initiation sites and are then released. Extracytoplasmic function (ECF) sigma factors are held in an inactive form by an anti-sigma factor until released, although no anti-sigma factor is known for this protein. Regulates the promoter of SigI, may not be autoregulated. The sequence is that of ECF RNA polymerase sigma factor SigJ (sigJ) from Mycobacterium tuberculosis (strain ATCC 25618 / H37Rv).